The primary structure comprises 407 residues: tRNA pseudouridine synthase 4 (407 aa).

The tract at residues 83 to 105 (FRPAPPHPNDRNRRRRKSNRLPD) is disordered. The active-site Nucleophile is aspartate 115. A disordered region spans residues 274–298 (TEQDINPQDGDEKINAKSPTTNSVT). Serine 291 bears the Phosphoserine mark. Threonine 293 is modified (phosphothreonine). Serine 296 is subject to Phosphoserine. Residue threonine 406 is modified to Phosphothreonine.

The protein belongs to the pseudouridine synthase TruB family.

It localises to the nucleus. It is found in the mitochondrion. It catalyses the reaction uridine(55) in tRNA = pseudouridine(55) in tRNA. The catalysed reaction is a uridine in mRNA = a pseudouridine in mRNA. Responsible for synthesis of pseudouridine from uracil-55 in the psi GC loop of transfer RNAs. Also catalyzes pseudouridylation of mRNAs with the consensus sequence 5'-GGUUCRA-3'. This is tRNA pseudouridine synthase 4 from Schizosaccharomyces pombe (strain 972 / ATCC 24843) (Fission yeast).